Here is a 212-residue protein sequence, read N- to C-terminus: MESTEKLTDTNAILAYLYETFPLCFIAEGETKPLKIGLFQDLAERLADDSKVSKTQLRIALRRYTSSWRYLKCVKAGAQRIDLDGNACGELEQEHIDHAAATLKESQDKAKAKRVAQAKSANPAAKTAKKPVKKPVAKRPKQTQSSKPAKEPVVAENLTPAVLAELKPKQRVNVKLGKSPVAGVILDIKKEDVQVQLDSGLTIKVRAEHILL.

Positions 107–153 are disordered; that stretch reads QDKAKAKRVAQAKSANPAAKTAKKPVKKPVAKRPKQTQSSKPAKEPV. Residues 117–126 show a composition bias toward low complexity; the sequence is QAKSANPAAK. A compositionally biased stretch (basic residues) spans 127-141; that stretch reads TAKKPVKKPVAKRPK.

Belongs to the ProQ family.

It localises to the cytoplasm. Its function is as follows. RNA chaperone with significant RNA binding, RNA strand exchange and RNA duplexing activities. The protein is RNA chaperone ProQ of Shewanella halifaxensis (strain HAW-EB4).